Consider the following 1420-residue polypeptide: DNA-directed RNA polymerase subunit beta' (1420 aa).

The Zn(2+) site is built by cysteine 71, cysteine 73, cysteine 86, and cysteine 89. The Mg(2+) site is built by aspartate 461, aspartate 463, and aspartate 465. Zn(2+) is bound by residues cysteine 815, cysteine 889, cysteine 896, and cysteine 899.

It belongs to the RNA polymerase beta' chain family. As to quaternary structure, the RNAP catalytic core consists of 2 alpha, 1 beta, 1 beta' and 1 omega subunit. When a sigma factor is associated with the core the holoenzyme is formed, which can initiate transcription. Mg(2+) serves as cofactor. Zn(2+) is required as a cofactor.

It carries out the reaction RNA(n) + a ribonucleoside 5'-triphosphate = RNA(n+1) + diphosphate. In terms of biological role, DNA-dependent RNA polymerase catalyzes the transcription of DNA into RNA using the four ribonucleoside triphosphates as substrates. In Histophilus somni (strain 2336) (Haemophilus somnus), this protein is DNA-directed RNA polymerase subunit beta'.